The sequence spans 953 residues: Isoleucine--tRNA ligase (953 aa).

A 'HIGH' region motif is present at residues 57–67 (PYANGDIHIGH). Residue Glu-582 participates in L-isoleucyl-5'-AMP binding. A 'KMSKS' region motif is present at residues 623 to 627 (KMSKS). Lys-626 contributes to the ATP binding site. 4 residues coordinate Zn(2+): Cys-916, Cys-919, Cys-936, and Cys-939.

The protein belongs to the class-I aminoacyl-tRNA synthetase family. IleS type 1 subfamily. Monomer. Zn(2+) is required as a cofactor.

The protein localises to the cytoplasm. It carries out the reaction tRNA(Ile) + L-isoleucine + ATP = L-isoleucyl-tRNA(Ile) + AMP + diphosphate. Its function is as follows. Catalyzes the attachment of isoleucine to tRNA(Ile). As IleRS can inadvertently accommodate and process structurally similar amino acids such as valine, to avoid such errors it has two additional distinct tRNA(Ile)-dependent editing activities. One activity is designated as 'pretransfer' editing and involves the hydrolysis of activated Val-AMP. The other activity is designated 'posttransfer' editing and involves deacylation of mischarged Val-tRNA(Ile). The sequence is that of Isoleucine--tRNA ligase from Bordetella avium (strain 197N).